The following is a 130-amino-acid chain: ATP synthase epsilon chain, chloroplastic (130 aa).

This sequence belongs to the ATPase epsilon chain family. As to quaternary structure, F-type ATPases have 2 components, CF(1) - the catalytic core - and CF(0) - the membrane proton channel. CF(1) has five subunits: alpha(3), beta(3), gamma(1), delta(1), epsilon(1). CF(0) has three main subunits: a, b and c.

It is found in the plastid. The protein resides in the chloroplast thylakoid membrane. Produces ATP from ADP in the presence of a proton gradient across the membrane. The protein is ATP synthase epsilon chain, chloroplastic of Tupiella akineta (Green alga).